Consider the following 425-residue polypeptide: MVKLSIVLTPQFLSHDQSQLTKELQQHVKSVTCPCEYLRKVINSLAVYRHRETDFGVGVRDHPGQHGKTPSPQKLDNLIIIIIGFLRRYTFNILFCTSCLCVSFLKTIFWSRNGHDGSMDVQQRAWRSNRSRQKGLRSICMHTKKRVSSFRGNKIGLKDVITLRRHVETKVRAKIRKRKVTTKINRHDKINGKRKTARKQKMFQRAQELRRRAEDYHKCKIPPSARKPLCNWVRMVAAEHRHSSGLPYWPYLTAETLKNRMGRQPPPPTQQHSITDNSLSLKTPTECLLTPLPPSVDDNIKECPLAPLPPSPLPPSVDDNLKECLFVPLPPSPLPPSVDDNLKTPPLATQEAEVEKPPKPKRWRVDEVEQSPKPKRRRVDEVEQSPKPKRQREAEAQQLPKPKRRRLSKLRTRHCTQAWAIRINP.

The segment at 332–414 (SPLPPSVDDN…RRLSKLRTRH (83 aa)) is disordered. The span at 353 to 395 (EVEKPPKPKRWRVDEVEQSPKPKRRRVDEVEQSPKPKRQREAE) shows a compositional bias: basic and acidic residues. Residues 401–414 (KPKRRRLSKLRTRH) show a composition bias toward basic residues.

The protein belongs to the NPIP family.

The polypeptide is Nuclear pore complex-interacting protein family member B6 (NPIPB6) (Homo sapiens (Human)).